Consider the following 134-residue polypeptide: Protein dpy-30 homolog (134 aa).

The tract at residues 1–81 is disordered; sequence MEAKTDAPIS…ETNNMPTRQY (81 aa). The segment covering 31-68 has biased composition (low complexity); that stretch reads AQANPTAAPGAPPSGAIAVGQSTNPVAQQQQQPAVAKK. Residues 71–81 are compositionally biased toward polar residues; the sequence is SETNNMPTRQY.

It belongs to the dpy-30 family. Core component of several methyltransferase-containing complexes. Component of the SET1 complex, composed at least of the catalytic subunit Set1, wds/WDR5, Wdr82, Rbbp5, ash2, Cfp1/CXXC1, hcf and Dpy-30L1. Component of the MLL3/4 complex composed at least of the catalytic subunit trr, ash2, Rbbp5, Dpy-30L1, wds, hcf, ptip, Pa1, Utx, Lpt and Ncoa6. In terms of tissue distribution, expressed in larval brain, gonad, imaginal disk and salivary gland and in adult brain, testis, ovary and salivary gland.

The protein localises to the nucleus. Functionally, component of the SET1 complex that specifically di- and trimethylates 'Lys-4' of histone H3 and of the MLL3/4 complex which also methylates histone H3 'Lys-4'. Inhibits MTF-1 transcription factor activity. The chain is Protein dpy-30 homolog from Drosophila melanogaster (Fruit fly).